The chain runs to 1412 residues: Erbin (1412 aa).

LRR repeat units lie at residues Thr23–Phe44, Thr47–Cys68, Ser70–Leu91, Asn93–Cys114, Val116–Leu137, Asn139–Thr161, Lys162–Leu183, Gln185–Leu206, Gly208–Leu229, Gln231–Cys252, Asn254–Leu275, Asn277–Leu298, Ser300–Leu321, Asn323–Trp344, Asn346–Met367, Lys369–Gln391, and Gln392–Thr413. Residues Ser440 and Ser444 each carry the phosphoserine modification. Disordered regions lie at residues Cys464–Asp489 and Lys506–Val542. The segment covering Glu470 to Leu480 has biased composition (basic and acidic residues). Tyr483 is modified (phosphotyrosine). Thr485 is subject to Phosphothreonine. Over residues Lys506–Gly532 the composition is skewed to basic and acidic residues. Over residues Val533 to Val542 the composition is skewed to low complexity. Ser569, Ser598, Ser602, Ser603, and Ser620 each carry phosphoserine. Positions Pro615–Cys681 are disordered. Basic and acidic residues predominate over residues Asn632–Asp641. Residues Asn650 to Ser662 are compositionally biased toward low complexity. Over residues Arg663–Cys681 the composition is skewed to polar residues. Ser715 bears the Phosphoserine mark. The tract at residues Glu803–Val867 is disordered. Polar residues predominate over residues Glu817–Arg835. Phosphoserine is present on residues Ser852, Ser857, and Ser872. The residue at position 917 (Thr917) is a Phosphothreonine. Tyr920 bears the Phosphotyrosine mark. Position 931 is a phosphoserine (Ser931). Tyr972 is subject to Phosphotyrosine. Disordered stretches follow at residues Asn997–Tyr1021 and Gln1075–Val1192. Polar residues predominate over residues Gln1075 to Val1086. Tyr1104 bears the Phosphotyrosine mark. The span at Met1157–Lys1171 shows a compositional bias: polar residues. 3 positions are modified to phosphoserine: Ser1158, Ser1179, and Ser1286. Positions Glu1321 to Val1410 constitute a PDZ domain.

The protein belongs to the LAP (LRR and PDZ) protein family. Interacts with ERBB2, BPAG1 and ITGB4. May favor the localization of ERBB2, by restricting its presence to the basolateral membrane of epithelial cells. Also found to interact with ARVCF and delta catenin. Interacts (via C-terminus) with DST Isoform 3 (via N-terminus). Interacts with NOD2 (via CARD domain). In terms of tissue distribution, highly expressed in brain, heart, kidney, muscle and stomach, followed by liver, spleen and intestine.

The protein localises to the cell junction. It is found in the hemidesmosome. It localises to the nucleus membrane. The protein resides in the basolateral cell membrane. In terms of biological role, acts as an adapter for the receptor ERBB2, in epithelia. By binding the unphosphorylated 'Tyr-1248' of receptor ERBB2, it may contribute to stabilize this unphosphorylated state. Inhibits NOD2-dependent NF-kappa-B signaling and pro-inflammatory cytokine secretion. In Homo sapiens (Human), this protein is Erbin.